The following is a 188-amino-acid chain: HTH-type transcriptional regulator Mb3439c (188 aa).

One can recognise an HTH tetR-type domain in the interval 17 to 77 (EEVAAAILQA…AVLDHLGTKL (61 aa)). Residues 40–59 (SIRDIAARSKVNHGLVFRHF) constitute a DNA-binding region (H-T-H motif).

In terms of biological role, negatively regulates the expression of sulfate ester dioxygenase Mb3440 and its own expression. The protein is HTH-type transcriptional regulator Mb3439c of Mycobacterium bovis (strain ATCC BAA-935 / AF2122/97).